A 439-amino-acid polypeptide reads, in one-letter code: Acyl-coenzyme A thioesterase 9, mitochondrial (439 aa).

A mitochondrion-targeting transit peptide spans 1-21; it reads MKRAAIRLWTLNKGLLTHGRG. 2 consecutive HotDog ACOT-type domains span residues 85 to 209 and 289 to 401; these read SYIE…RDSE and EDTK…EKEV. N6-acetyllysine is present on K102.

Belongs to the acyl coenzyme A hydrolase family. In terms of assembly, interacts with NYAP1, NYAP2 and MYO16. Widely expressed.

The protein localises to the mitochondrion. It localises to the mitochondrion matrix. The protein resides in the mitochondrion inner membrane. It catalyses the reaction butanoyl-CoA + H2O = butanoate + CoA + H(+). It carries out the reaction propanoyl-CoA + H2O = propanoate + CoA + H(+). The enzyme catalyses hexadecanoyl-CoA + H2O = hexadecanoate + CoA + H(+). The catalysed reaction is octanoyl-CoA + H2O = octanoate + CoA + H(+). It catalyses the reaction decanoyl-CoA + H2O = decanoate + CoA + H(+). It carries out the reaction tetradecanoyl-CoA + H2O = tetradecanoate + CoA + H(+). The enzyme catalyses 4,8-dimethylnonanoyl-CoA + H2O = 4,8-dimethylnonanoate + CoA + H(+). The catalysed reaction is 3-methylbutanoyl-CoA + H2O = 3-methylbutanoate + CoA + H(+). It catalyses the reaction 2-methylpropanoyl-CoA + H2O = 2-methylpropanoate + CoA + H(+). Its pathway is lipid metabolism; fatty acid metabolism. Strongly inhibited by NADH and CoA. Functionally, mitochondrial acyl-CoA thioesterase. Catalyzes the hydrolysis of acyl-CoAs into free fatty acids and coenzyme A (CoA), regulating their respective intracellular levels. Shows a clear preference for hydrophobic short-, medium-, and long-chain saturated acyl-CoAs with some activity also with short-chain dicarboxylic CoA esters. Regulates both mitochondrial lipid and amino acid metabolism. The sequence is that of Acyl-coenzyme A thioesterase 9, mitochondrial (Acot9) from Mus musculus (Mouse).